The primary structure comprises 312 residues: MIEFEKPRIEKIDENRDYGKFVVEPLERGYGTTLGNSLRRILLSSLPGAAITNIQIDGVLHEFSTIPGVREDVTQIILNIKGLALKLYAEEEKTLEIDITGPATVTAGDIIVDSDVEILNKDLVICSVAEGATFHARLTVKPGRGYVQADENKKEDMPIGVLPVDSIYTPVLRVNYQVENTRVGRRDDFDKLTMEIWTDGSIIPQEALSLAAKIMTEHLDIFVNLTDEAKNAEIMVEKEETQKEKMLEMTIEELDLSVRSYNCLKRAGINTVQELTNKSEPEMIKVRNLGRKSLEEVKLKLHDLGLGLRKDD.

The alpha N-terminal domain (alpha-NTD) stretch occupies residues 1–226; sequence MIEFEKPRIE…EHLDIFVNLT (226 aa). Residues 243-312 are alpha C-terminal domain (alpha-CTD); that stretch reads KEKMLEMTIE…DLGLGLRKDD (70 aa).

Belongs to the RNA polymerase alpha chain family. As to quaternary structure, homodimer. The RNAP catalytic core consists of 2 alpha, 1 beta, 1 beta' and 1 omega subunit. When a sigma factor is associated with the core the holoenzyme is formed, which can initiate transcription.

The catalysed reaction is RNA(n) + a ribonucleoside 5'-triphosphate = RNA(n+1) + diphosphate. DNA-dependent RNA polymerase catalyzes the transcription of DNA into RNA using the four ribonucleoside triphosphates as substrates. The sequence is that of DNA-directed RNA polymerase subunit alpha from Enterococcus faecalis (strain ATCC 700802 / V583).